A 51-amino-acid chain; its full sequence is Bacteriocin aureocin A53 (51 aa).

At M1 the chain carries N-formylmethionine.

Its subcellular location is the secreted. Functionally, antibacterial peptide active against a broad range of lactic acid bacteria, L.monocytogenes and many epidemiologically unrelated strains of S.aureus involved in bovine mastitis. The chain is Bacteriocin aureocin A53 (aucA) from Staphylococcus aureus.